The primary structure comprises 557 residues: Nicotinate phosphoribosyltransferase 2 (557 aa).

Residues tyrosine 31 and threonine 219 each contribute to the nicotinate site. Position 222 is a phosphohistidine (histidine 222). Arginine 329 provides a ligand contact to nicotinate. Threonine 391 is a 5-phospho-alpha-D-ribose 1-diphosphate binding site.

The protein belongs to the NAPRTase family. It depends on Mg(2+) as a cofactor. The cofactor is Mn(2+). Transiently phosphorylated on a His residue during the reaction cycle. Phosphorylation strongly increases the affinity for substrates and increases the rate of nicotinate D-ribonucleotide production. Dephosphorylation regenerates the low-affinity form of the enzyme, leading to product release.

The catalysed reaction is nicotinate + 5-phospho-alpha-D-ribose 1-diphosphate + ATP + H2O = nicotinate beta-D-ribonucleotide + ADP + phosphate + diphosphate. It functions in the pathway cofactor biosynthesis; NAD(+) biosynthesis; nicotinate D-ribonucleotide from nicotinate: step 1/1. Functionally, catalyzes the first step in the biosynthesis of NAD from nicotinic acid, the ATP-dependent synthesis of beta-nicotinate D-ribonucleotide from nicotinate and 5-phospho-D-ribose 1-phosphate. Helps prevent cellular oxidative stress via its role in NAD biosynthesis. The chain is Nicotinate phosphoribosyltransferase 2 from Arabidopsis thaliana (Mouse-ear cress).